Reading from the N-terminus, the 435-residue chain is Transcription activator AKTR-2 (435 aa).

Positions 16–43 (CDFCTQSKLRCNKNKPSCRRCTIQQQVC) form a DNA-binding region, zn(2)-C6 fungal-type. The segment at 49-103 (RRTGRPPKHPRRADDSQETSGQHGHQDPMTSAPADSCEQQSSHLDLEGDDTDFTL) is disordered. Positions 50–59 (RTGRPPKHPR) are enriched in basic residues.

It localises to the nucleus. Functionally, transcription factor that regulates the expression of the gene clusters that mediate the biosynthesis of the host-selective toxins (HSTs) AK-toxins responsible for Japanese pear black spot disease by the Japanese pear pathotype. AK-toxins are esters of 9,10-epoxy 8-hydroxy 9-methyldecatrienoic acid (EDA). On cellular level, AK-toxins affect plasma membrane of susceptible cells and cause a sudden increase in loss of K(+) after a few minutes of toxin treatment. This is Transcription activator AKTR-2 from Alternaria alternata (Alternaria rot fungus).